Here is a 429-residue protein sequence, read N- to C-terminus: Enolase (429 aa).

Gln163 is a (2R)-2-phosphoglycerate binding site. The Proton donor role is filled by Glu205. Positions 242, 287, and 314 each coordinate Mg(2+). 4 residues coordinate (2R)-2-phosphoglycerate: Lys339, Arg368, Ser369, and Lys390. The Proton acceptor role is filled by Lys339.

It belongs to the enolase family. It depends on Mg(2+) as a cofactor.

Its subcellular location is the cytoplasm. It is found in the secreted. It localises to the cell surface. It catalyses the reaction (2R)-2-phosphoglycerate = phosphoenolpyruvate + H2O. It functions in the pathway carbohydrate degradation; glycolysis; pyruvate from D-glyceraldehyde 3-phosphate: step 4/5. Functionally, catalyzes the reversible conversion of 2-phosphoglycerate (2-PG) into phosphoenolpyruvate (PEP). It is essential for the degradation of carbohydrates via glycolysis. The polypeptide is Enolase (Anaeromyxobacter dehalogenans (strain 2CP-C)).